The chain runs to 610 residues: Diol dehydratase-reactivating factor large subunit (610 aa).

ATP is bound at residue 11–13; sequence NSS. The Mg(2+) site is built by threonine 105, aspartate 166, and aspartate 183. ATP contacts are provided by residues 459-462, 557-558, and arginine 591; these read EEIK and GS.

This sequence belongs to the DdrA/PduG family. Component of the DDR complex, a heterotetramer of DdrA(2)/DdrB(2). The DDR complex interacts with the diol dehydratase complex in the presence of ADP but not ATP. The cofactor is Mg(2+).

The enzyme catalyses ATP + H2O = ADP + phosphate + H(+). In terms of biological role, large subunit of the diol dehydratase-reactivating factor (DDR), which reactivates suicidally inhibited adenosylcobalamin-dependent diol dehydratase (DD, pddA, pddB, pddC). DDR acts as a chaperone, reactivating inactivated DD holoenzyme in the presence of ATP, Mg(2+) and free adenosylcobalamin (AdoCbl), by mediating the exchange of the tightly bound damaged cofactor AdoCbl for a free intact one. Reactivation takes place in two steps: ADP-dependent cobalamin release, then ATP-dependent dissociation of the DD apoenzyme-DDR complex. DDR has weak ATPase activity which is required for DD reactivation. This subunit contains the adenosine nucleotide binding site. Activates glycerol-inactivated, O2-inactivated holoenzyme and inactivated enzyme-cyanocobalamin complex. Also reactivates glycerol-inactivated hologlycerol dehydratase, a DD isozyme. This is Diol dehydratase-reactivating factor large subunit from Klebsiella michiganensis (strain ATCC 8724 / DSM 4798 / JCM 20051 / NBRC 3318 / NRRL B-199 / KCTC 1686 / BUCSAV 143 / CCM 1901).